Here is a 353-residue protein sequence, read N- to C-terminus: Nicotinate-nucleotide--dimethylbenzimidazole phosphoribosyltransferase (353 aa).

E319 acts as the Proton acceptor in catalysis.

Belongs to the CobT family.

It catalyses the reaction 5,6-dimethylbenzimidazole + nicotinate beta-D-ribonucleotide = alpha-ribazole 5'-phosphate + nicotinate + H(+). It participates in nucleoside biosynthesis; alpha-ribazole biosynthesis; alpha-ribazole from 5,6-dimethylbenzimidazole: step 1/2. Functionally, catalyzes the synthesis of alpha-ribazole-5'-phosphate from nicotinate mononucleotide (NAMN) and 5,6-dimethylbenzimidazole (DMB). The polypeptide is Nicotinate-nucleotide--dimethylbenzimidazole phosphoribosyltransferase (Chlorobaculum tepidum (strain ATCC 49652 / DSM 12025 / NBRC 103806 / TLS) (Chlorobium tepidum)).